The following is a 433-amino-acid chain: ATP-dependent protease ATPase subunit HslU (433 aa).

Residues V18, 60-65 (GVGKTE), D246, E311, and R383 contribute to the ATP site.

This sequence belongs to the ClpX chaperone family. HslU subfamily. In terms of assembly, a double ring-shaped homohexamer of HslV is capped on each side by a ring-shaped HslU homohexamer. The assembly of the HslU/HslV complex is dependent on binding of ATP.

The protein localises to the cytoplasm. In terms of biological role, ATPase subunit of a proteasome-like degradation complex; this subunit has chaperone activity. The binding of ATP and its subsequent hydrolysis by HslU are essential for unfolding of protein substrates subsequently hydrolyzed by HslV. HslU recognizes the N-terminal part of its protein substrates and unfolds these before they are guided to HslV for hydrolysis. This Rhodopseudomonas palustris (strain TIE-1) protein is ATP-dependent protease ATPase subunit HslU.